The sequence spans 229 residues: Molybdenum transport system permease protein ModB (229 aa).

The ABC transmembrane type-1 domain occupies 6–214 (INLSLSVAVS…LISLLLSEWL (209 aa)). The next 5 membrane-spanning stretches (helical) occupy residues 12 to 32 (VAVSSMLWSLPLAIFVAWLLA), 45 to 65 (VIHLPLVLPPVVIGYLLLVAM), 83 to 103 (FGFSWKGAVLSSAVVAFPLVV), 132 to 152 (FFTITLPLSLPGVLAGLVLGF), and 196 to 216 (LCLFAIILSLISLLLSEWLSK).

Belongs to the binding-protein-dependent transport system permease family. CysTW subfamily.

It is found in the cell inner membrane. Part of the binding-protein-dependent transport system for molybdenum; probably responsible for the translocation of the substrate across the membrane. This chain is Molybdenum transport system permease protein ModB (modB), found in Haemophilus influenzae (strain ATCC 51907 / DSM 11121 / KW20 / Rd).